A 452-amino-acid chain; its full sequence is Probable ECA polymerase (452 aa).

The next 11 membrane-spanning stretches (helical) occupy residues F6 to F26, V37 to L57, V63 to G83, V118 to L138, G155 to L175, A181 to G201, I207 to W227, M228 to Y248, L341 to I361, Y378 to V398, and V410 to F430.

The protein belongs to the WzyE family. In terms of assembly, probably part of a complex composed of WzxE, WzyE and WzzE.

The protein localises to the cell inner membrane. Its pathway is bacterial outer membrane biogenesis; enterobacterial common antigen biosynthesis. Probably involved in the polymerization of enterobacterial common antigen (ECA) trisaccharide repeat units. This chain is Probable ECA polymerase, found in Salmonella gallinarum (strain 287/91 / NCTC 13346).